The sequence spans 210 residues: Protein GrpE (210 aa).

Disordered regions lie at residues Met-1 to Ile-40 and Lys-191 to Ala-210. A compositionally biased stretch (low complexity) spans Asp-11–Ala-23.

Belongs to the GrpE family. Homodimer.

It localises to the cytoplasm. In terms of biological role, participates actively in the response to hyperosmotic and heat shock by preventing the aggregation of stress-denatured proteins, in association with DnaK and GrpE. It is the nucleotide exchange factor for DnaK and may function as a thermosensor. Unfolded proteins bind initially to DnaJ; upon interaction with the DnaJ-bound protein, DnaK hydrolyzes its bound ATP, resulting in the formation of a stable complex. GrpE releases ADP from DnaK; ATP binding to DnaK triggers the release of the substrate protein, thus completing the reaction cycle. Several rounds of ATP-dependent interactions between DnaJ, DnaK and GrpE are required for fully efficient folding. The sequence is that of Protein GrpE from Rhizobium johnstonii (strain DSM 114642 / LMG 32736 / 3841) (Rhizobium leguminosarum bv. viciae).